The following is a 540-amino-acid chain: Chaperonin GroEL 1 (540 aa).

ATP-binding positions include 29 to 32 (TLGP), 86 to 90 (DGTTT), G413, 478 to 480 (NAA), and D494.

The protein belongs to the chaperonin (HSP60) family. In terms of assembly, forms a cylinder of 14 subunits composed of two heptameric rings stacked back-to-back. Interacts with the co-chaperonin GroES.

It localises to the cytoplasm. The catalysed reaction is ATP + H2O + a folded polypeptide = ADP + phosphate + an unfolded polypeptide.. Together with its co-chaperonin GroES, plays an essential role in assisting protein folding. The GroEL-GroES system forms a nano-cage that allows encapsulation of the non-native substrate proteins and provides a physical environment optimized to promote and accelerate protein folding. This Mycobacterium sp. (strain JLS) protein is Chaperonin GroEL 1.